An 835-amino-acid polypeptide reads, in one-letter code: Disease resistance protein RPP13 (835 aa).

Residues 25–41 (MAVKEDLEELKTELTCI) adopt a coiled-coil conformation. In terms of domain architecture, NB-ARC spans 144–453 (SSLRVRQLRR…AEGFIQGDEE (310 aa)). 192–199 (GMGGLGKT) is an ATP binding site.

It belongs to the disease resistance NB-LRR family. RPP13 subfamily.

Disease resistance protein. Resistance proteins guard the plant against pathogens that contain an appropriate avirulence protein via an indirect interaction with this avirulence protein. That triggers a defense system including the hypersensitive response, which restricts the pathogen growth. In contrast to other resistance proteins, it works independently of ESD1 and NSD1 proteins and does not require the accumulation of salicylic acid, suggesting the existence of an independent signaling pathway. The specificity to avirulence proteins differs in the different cultivars. This is Disease resistance protein RPP13 (RPP13) from Arabidopsis thaliana (Mouse-ear cress).